Reading from the N-terminus, the 285-residue chain is tRNA (cytidine(32)/guanosine(34)-2'-O)-methyltransferase (285 aa).

Residues G53, W55, D83, D99, and D124 each contribute to the S-adenosyl-L-methionine site. Catalysis depends on K164, which acts as the Proton acceptor.

It belongs to the class I-like SAM-binding methyltransferase superfamily. RNA methyltransferase RlmE family. TRM7 subfamily.

Its subcellular location is the cytoplasm. The catalysed reaction is cytidine(32)/guanosine(34) in tRNA + 2 S-adenosyl-L-methionine = 2'-O-methylcytidine(32)/2'-O-methylguanosine(34) in tRNA + 2 S-adenosyl-L-homocysteine + 2 H(+). Functionally, methylates the 2'-O-ribose of nucleotides at positions 32 and 34 of the tRNA anticodon loop of substrate tRNAs. Requires trm732 for methylation of the cytidine at position 32 of the anticodon loop of substrate tRNAs. Requires trm734 for methylation of the nucleotide at position 34 of the anticodon loop of substrate tRNAs. Methylates tRNA(Phe). The sequence is that of tRNA (cytidine(32)/guanosine(34)-2'-O)-methyltransferase from Schizosaccharomyces pombe (strain 972 / ATCC 24843) (Fission yeast).